The sequence spans 157 residues: 2-C-methyl-D-erythritol 2,4-cyclodiphosphate synthase (157 aa).

Residues Asp-8 and His-10 each contribute to the a divalent metal cation site. 4-CDP-2-C-methyl-D-erythritol 2-phosphate is bound by residues Asp-8–His-10 and His-34–Ser-35. Residue His-42 coordinates a divalent metal cation. 4-CDP-2-C-methyl-D-erythritol 2-phosphate-binding positions include Asp-56–Gly-58, Thr-132–Glu-135, Phe-139, and Arg-142.

Belongs to the IspF family. Homotrimer. The cofactor is a divalent metal cation.

It catalyses the reaction 4-CDP-2-C-methyl-D-erythritol 2-phosphate = 2-C-methyl-D-erythritol 2,4-cyclic diphosphate + CMP. Its pathway is isoprenoid biosynthesis; isopentenyl diphosphate biosynthesis via DXP pathway; isopentenyl diphosphate from 1-deoxy-D-xylulose 5-phosphate: step 4/6. Functionally, involved in the biosynthesis of isopentenyl diphosphate (IPP) and dimethylallyl diphosphate (DMAPP), two major building blocks of isoprenoid compounds. Catalyzes the conversion of 4-diphosphocytidyl-2-C-methyl-D-erythritol 2-phosphate (CDP-ME2P) to 2-C-methyl-D-erythritol 2,4-cyclodiphosphate (ME-CPP) with a corresponding release of cytidine 5-monophosphate (CMP). The polypeptide is 2-C-methyl-D-erythritol 2,4-cyclodiphosphate synthase (Symbiobacterium thermophilum (strain DSM 24528 / JCM 14929 / IAM 14863 / T)).